The sequence spans 602 residues: Chaperone protein DnaK (602 aa).

Position 199 is a phosphothreonine; by autocatalysis (threonine 199).

Belongs to the heat shock protein 70 family.

Its function is as follows. Acts as a chaperone. The chain is Chaperone protein DnaK from Carsonella ruddii (strain PV).